Here is a 155-residue protein sequence, read N- to C-terminus: DNA-directed RNA polymerase 1A (155 aa).

Residue aspartate 88 is part of the active site.

It belongs to the phage and mitochondrial RNA polymerase family.

The enzyme catalyses RNA(n) + a ribonucleoside 5'-triphosphate = RNA(n+1) + diphosphate. In terms of biological role, DNA-dependent RNA polymerase catalyzes the transcription of DNA into RNA using the four ribonucleoside triphosphates as substrates. The protein is DNA-directed RNA polymerase 1A (RPOT1-SYL) of Nicotiana tabacum (Common tobacco).